Consider the following 347-residue polypeptide: NADH-ubiquinone oxidoreductase chain 2 (347 aa).

The next 10 membrane-spanning stretches (helical) occupy residues 3–23 (PPIL…VLTS), 25–45 (HWLL…PILM), 59–79 (YFLT…INLL), 93–115 (MAST…HFWV), 149–169 (INTN…GWGG), 178–198 (ILAY…TYNP), 200–220 (VMIL…MLFI), 242–262 (SFIL…GFIP), 274–294 (EMII…YFYM), and 323–343 (MALL…TPMM).

It belongs to the complex I subunit 2 family. As to quaternary structure, core subunit of respiratory chain NADH dehydrogenase (Complex I) which is composed of 45 different subunits. Interacts with TMEM242.

The protein localises to the mitochondrion inner membrane. It catalyses the reaction a ubiquinone + NADH + 5 H(+)(in) = a ubiquinol + NAD(+) + 4 H(+)(out). Functionally, core subunit of the mitochondrial membrane respiratory chain NADH dehydrogenase (Complex I) which catalyzes electron transfer from NADH through the respiratory chain, using ubiquinone as an electron acceptor. Essential for the catalytic activity and assembly of complex I. This chain is NADH-ubiquinone oxidoreductase chain 2, found in Nandinia binotata (African palm civet).